The primary structure comprises 269 residues: Small ribosomal subunit protein uS2 (269 aa).

Positions 224 to 269 (ANQGREDSEDVYSETENDTEETDEELVSEEDLKEFVENSEEESDEE) are disordered. Residues 230–269 (DSEDVYSETENDTEETDEELVSEEDLKEFVENSEEESDEE) are compositionally biased toward acidic residues.

This sequence belongs to the universal ribosomal protein uS2 family.

This Finegoldia magna (strain ATCC 29328 / DSM 20472 / WAL 2508) (Peptostreptococcus magnus) protein is Small ribosomal subunit protein uS2.